The sequence spans 369 residues: Phospho-N-acetylmuramoyl-pentapeptide-transferase (369 aa).

Helical transmembrane passes span 2-22, 54-74, 80-100, 113-133, 158-178, 195-215, 241-261, 268-288, 293-313, and 347-367; these read IAIL…TPFF, GLVI…FLGL, GLLV…DDIL, FYKV…TFLV, ALFS…LLWI, LDGL…VIGF, PLDM…FLWW, IMMG…LSIL, LLFL…ILQI, and FWII…ADWL.

It belongs to the glycosyltransferase 4 family. MraY subfamily. It depends on Mg(2+) as a cofactor.

Its subcellular location is the cell membrane. The enzyme catalyses UDP-N-acetyl-alpha-D-muramoyl-L-alanyl-gamma-D-glutamyl-meso-2,6-diaminopimeloyl-D-alanyl-D-alanine + di-trans,octa-cis-undecaprenyl phosphate = di-trans,octa-cis-undecaprenyl diphospho-N-acetyl-alpha-D-muramoyl-L-alanyl-D-glutamyl-meso-2,6-diaminopimeloyl-D-alanyl-D-alanine + UMP. It participates in cell wall biogenesis; peptidoglycan biosynthesis. Its function is as follows. Catalyzes the initial step of the lipid cycle reactions in the biosynthesis of the cell wall peptidoglycan: transfers peptidoglycan precursor phospho-MurNAc-pentapeptide from UDP-MurNAc-pentapeptide onto the lipid carrier undecaprenyl phosphate, yielding undecaprenyl-pyrophosphoryl-MurNAc-pentapeptide, known as lipid I. In Tropheryma whipplei (strain TW08/27) (Whipple's bacillus), this protein is Phospho-N-acetylmuramoyl-pentapeptide-transferase.